A 160-amino-acid chain; its full sequence is MTGAVCPGSFDPVTLGHVDVFERASAQFDEVVVAILTNPAKKGMFDLDERIAMIEESTTHLSNLRVEAGQGLVVDFVRSRGMTAIVKGLRTGTDFEYELQMAQMNKHIAGVDTFFVATAPRYSFVSSSLAKEVAMLGGDVSELLPEPVNRRLREKLSGRS.

Ser-9 lines the substrate pocket. Residues 9 to 10 (SF) and His-17 each bind ATP. Residues Lys-41, Val-73, and Lys-87 each contribute to the substrate site. ATP contacts are provided by residues 88 to 90 (GLR), Glu-98, and 122 to 128 (YSFVSSS).

It belongs to the bacterial CoaD family. In terms of assembly, homohexamer. The cofactor is Mg(2+).

It localises to the cytoplasm. It carries out the reaction (R)-4'-phosphopantetheine + ATP + H(+) = 3'-dephospho-CoA + diphosphate. Its pathway is cofactor biosynthesis; coenzyme A biosynthesis; CoA from (R)-pantothenate: step 4/5. Its function is as follows. Reversibly transfers an adenylyl group from ATP to 4'-phosphopantetheine, yielding dephospho-CoA (dPCoA) and pyrophosphate. The sequence is that of Phosphopantetheine adenylyltransferase from Mycobacterium avium (strain 104).